Reading from the N-terminus, the 228-residue chain is DNA-3-methyladenine glycosylase 1 (228 aa).

D170 (proton acceptor) is an active-site residue.

This sequence belongs to the alkylbase DNA glycosidase AlkA family.

It carries out the reaction Hydrolysis of alkylated DNA, releasing 3-methyladenine, 3-methylguanine, 7-methylguanine and 7-methyladenine.. Functionally, hydrolysis of the deoxyribose N-glycosidic bond to excise 3-methyladenine or 7-methyladenine from the damaged DNA polymer formed by alkylation lesions. Can release ethylated and propylated bases from DNA in addition to 3-methyladenine. The protein is DNA-3-methyladenine glycosylase 1 (mag1) of Schizosaccharomyces pombe (strain 972 / ATCC 24843) (Fission yeast).